The primary structure comprises 741 residues: MDESFNSILEPENAWLFLFDDVSQLQQLPIVQNNQENFINSIDFNTGDVTTTNISGLNFQSLEESLNSDTSIENKPQIIEQIQFLQQQQQQQHDQIQQQLHNFQQQYQQQYQQRQQQYQQQYQKPYTPPSFIYSEKNDLVPQQQFHLGQENLQQPPQSLQQQQQPPSPSSPPQQQQQPQQQLQQLQQQHQQHQQHQQQPQFQQLPIQHELPQQSQLQHIQIQSQQIPTQPQPQQIQKQIQIEQPQVQVQQQIQPQQQIQPQQHIQLQQHIQLQQPQIQQQQLPPQTIQQKEINKKNQSKQSSNSMPLSQQIFFNTPKLDQHLLSYFQTQKTNNTINTLNVDQKRDNIEKQKENTSPPTPSSPVPTIINSNSTDINQISPSQQQQQQQQQQQQTTDINKILTLQQLEQQQLEYQKQQQQQQQFNLTFDDESKKSIKRINQNIANRNFRQRKKDHIKDIEDKMMELTLENEKLKKENESIRQQEHEGGTMAILKPSPEKKQLMLEIRSIVRQIGEALKEDNEKNLIYLLHMYHGAVAKRYSSIDKDAEQIASPEIQLRLASIGYVLKSTPFLTNIFQGIESDSWFNLFKEKANITSQQSVQLDIIREKYCEYNLKLLDEIHDLDSEVKKFFFQNIFVFQSYSISLKTSKPLDLSQQIEFACKLKLLKNKFFENSCLMFETFSSLSKILTPKQEALLLVEIDIFSCFNLKKFEMITNVWANKSKMKKSSDPFKIGDLSQIFEKP.

Positions 77-117 form a coiled coil; it reads QIIEQIQFLQQQQQQQHDQIQQQLHNFQQQYQQQYQQRQQQ. Composition is skewed to low complexity over residues 153–164, 172–237, 277–290, and 381–390; these read QQPPQSLQQQQQ, PQQQ…QIQK, IQQQQLPPQTIQQK, and QQQQQQQQQQ. Disordered regions lie at residues 153 to 237, 277 to 305, and 349 to 390; these read QQPP…QIQK, IQQQQLPPQTIQQKEINKKNQSKQSSNSM, and KQKE…QQQQ. Residues 429 to 492 enclose the bZIP domain; it reads ESKKSIKRIN…HEGGTMAILK (64 aa). Positions 431–432 are basic motif; sequence KK. The tract at residues 434–441 is leucine-zipper; it reads IKRINQNI.

The protein belongs to the bZIP family.

The protein localises to the nucleus. In terms of biological role, probable transcriptional regulator. The chain is Probable basic-leucine zipper transcription factor I (bzpI) from Dictyostelium discoideum (Social amoeba).